A 225-amino-acid polypeptide reads, in one-letter code: NAD(P)H-quinone oxidoreductase subunit K, chloroplastic (225 aa).

Residues cysteine 43, cysteine 44, cysteine 108, and cysteine 139 each contribute to the [4Fe-4S] cluster site.

This sequence belongs to the complex I 20 kDa subunit family. NDH is composed of at least 16 different subunits, 5 of which are encoded in the nucleus. [4Fe-4S] cluster is required as a cofactor.

Its subcellular location is the plastid. It is found in the chloroplast thylakoid membrane. The catalysed reaction is a plastoquinone + NADH + (n+1) H(+)(in) = a plastoquinol + NAD(+) + n H(+)(out). The enzyme catalyses a plastoquinone + NADPH + (n+1) H(+)(in) = a plastoquinol + NADP(+) + n H(+)(out). Its function is as follows. NDH shuttles electrons from NAD(P)H:plastoquinone, via FMN and iron-sulfur (Fe-S) centers, to quinones in the photosynthetic chain and possibly in a chloroplast respiratory chain. The immediate electron acceptor for the enzyme in this species is believed to be plastoquinone. Couples the redox reaction to proton translocation, and thus conserves the redox energy in a proton gradient. This is NAD(P)H-quinone oxidoreductase subunit K, chloroplastic from Draba nemorosa (Woodland whitlowgrass).